Reading from the N-terminus, the 288-residue chain is 33 kDa chaperonin (288 aa).

Disulfide bonds link cysteine 225–cysteine 227 and cysteine 258–cysteine 261.

This sequence belongs to the HSP33 family. Under oxidizing conditions two disulfide bonds are formed involving the reactive cysteines. Under reducing conditions zinc is bound to the reactive cysteines and the protein is inactive.

It is found in the cytoplasm. Functionally, redox regulated molecular chaperone. Protects both thermally unfolding and oxidatively damaged proteins from irreversible aggregation. Plays an important role in the bacterial defense system toward oxidative stress. This is 33 kDa chaperonin from Shewanella denitrificans (strain OS217 / ATCC BAA-1090 / DSM 15013).